The primary structure comprises 546 residues: Serine/threonine-protein kinase Chk2 (546 aa).

Positions 1–70 are disordered; it reads MKSHHQSHSS…SSHSSSGTLS (70 aa). Over residues 8 to 70 the composition is skewed to low complexity; it reads HSSTSSKAHD…SSHSSSGTLS (63 aa). Phosphothreonine; by MAP3K20 is present on T68. At S71 the chain carries Phosphoserine; by PLK3. Position 77 is a phosphothreonine; by ATM and MAP3K20 (T77). At S82 the chain carries Phosphoserine; by PLK3. The 63-residue stretch at 117-179 folds into the FHA domain; that stretch reads YWFGRDKSCE…NGTFVNTELI (63 aa). The Protein kinase domain occupies 224–490; that stretch reads YIMSKTLGSG…TEEALNHPWL (267 aa). Residues 231–238, K253, and 306–312 contribute to the ATP site; these read GSGACGEV and ELMEGGE. Residue D351 is the Proton acceptor of the active site. Residues 355 to 356 and D372 each bind ATP; that span reads EN. Residues 372–398 form a T-loop/activation segment region; it reads DFGQSKILGETSLMRTLCGTPTYLAPE. A Phosphoserine; by autocatalysis modification is found at S383. A phosphothreonine; by autocatalysis mark is found at T387 and T391. Residue S460 is modified to Phosphoserine.

The protein belongs to the protein kinase superfamily. CAMK Ser/Thr protein kinase family. CHK2 subfamily. Homodimer. Homodimerization is part of the activation process but the dimer may dissociate following activation. Interacts with PML. Interacts with TP53. Interacts with RB1; phosphorylates RB1. Interacts with BRCA1. Interacts (phosphorylated at Thr-68) with MDC1; requires ATM-mediated phosphorylation of CHEK2. Interacts with TP53BP1; modulates CHEK2 phosphorylation at Thr-68 in response to ionizing radiation. Interacts with CDC25A; phosphorylates CDC25A and mediates its degradation in response to ionizing radiation. Interacts with CUL1; mediates CHEK2 ubiquitination and regulation. Interacts with CDKN2AIP. Interacts (via protein kinase domain) with CCAR2 (via N-terminus). Interacts with SIRT1. Mg(2+) serves as cofactor. Post-translationally, phosphorylated. Phosphorylated at Ser-82 by PLK3 in response to DNA damage, promoting phosphorylation at Thr-77 by ATM and the G2/M transition checkpoint. Phosphorylation at Thr-77 induces homodimerization. Autophosphorylates at Thr-387 and Thr-391 in the T-loop/activation segment upon dimerization to become fully active. DNA damage-induced autophosphorylation at Ser-383 induces CUL1-mediated ubiquitination and regulates the pro-apoptotic function. Phosphorylation at Ser-460 also regulates ubiquitination. Phosphorylated by PLK4. In terms of processing, ubiquitinated. CUL1-mediated ubiquitination regulates the pro-apoptotic function. Ubiquitination may also regulate protein stability. Ubiquitinated by RNF8 via 'Lys-48'-linked ubiquitination. Ubiquitously expressed with higher levels in the thymus, spleen and colon (at protein level).

The protein resides in the nucleus. The protein localises to the PML body. Its subcellular location is the nucleoplasm. It carries out the reaction L-seryl-[protein] + ATP = O-phospho-L-seryl-[protein] + ADP + H(+). The catalysed reaction is L-threonyl-[protein] + ATP = O-phospho-L-threonyl-[protein] + ADP + H(+). Its activity is regulated as follows. Activated through phosphorylation at Thr-68 by ATM in response to DNA double-strand breaks. Activation is modulated by several mediators including MDC1 and TP53BP1. Induces homodimerization with exchange of the T-loop/activation segment between protomers and transphosphorylation of the protomers. The autophosphorylated kinase dimer is fully active. Negatively regulated by PPM1D through dephosphorylation of Thr-68. In terms of biological role, serine/threonine-protein kinase which is required for checkpoint-mediated cell cycle arrest, activation of DNA repair and apoptosis in response to the presence of DNA double-strand breaks. May also negatively regulate cell cycle progression during unperturbed cell cycles. Following activation, phosphorylates numerous effectors preferentially at the consensus sequence [L-X-R-X-X-S/T]. Regulates cell cycle checkpoint arrest through phosphorylation of CDC25A, CDC25B and CDC25C, inhibiting their activity. Inhibition of CDC25 phosphatase activity leads to increased inhibitory tyrosine phosphorylation of CDK-cyclin complexes and blocks cell cycle progression. May also phosphorylate NEK6 which is involved in G2/M cell cycle arrest. Regulates DNA repair through phosphorylation of BRCA2, enhancing the association of RAD51 with chromatin which promotes DNA repair by homologous recombination. Also stimulates the transcription of genes involved in DNA repair (including BRCA2) through the phosphorylation and activation of the transcription factor FOXM1. Regulates apoptosis through the phosphorylation of p53/TP53, MDM4 and PML. Phosphorylation of p53/TP53 at 'Ser-20' by CHEK2 may alleviate inhibition by MDM2, leading to accumulation of active p53/TP53. Phosphorylation of MDM4 may also reduce degradation of p53/TP53. Also controls the transcription of pro-apoptotic genes through phosphorylation of the transcription factor E2F1. Tumor suppressor, it may also have a DNA damage-independent function in mitotic spindle assembly by phosphorylating BRCA1. Its absence may be a cause of the chromosomal instability observed in some cancer cells. Promotes the CCAR2-SIRT1 association and is required for CCAR2-mediated SIRT1 inhibition. Under oxidative stress, promotes ATG7 ubiquitination by phosphorylating the E3 ubiquitin ligase TRIM32 at 'Ser-56' leading to positive regulation of the autophagosme assembly. The protein is Serine/threonine-protein kinase Chk2 of Mus musculus (Mouse).